We begin with the raw amino-acid sequence, 176 residues long: MSRIGKNPVVLPAGVEVTVGEQIVVKGPLGSLKTAAHSAVNVAVEGQNVTVSKVAGAANAAAMWGTMRANLNNMVTGVSKGFERKLQLVGVGYRAQAQGDTLNLSLGFSHPVAHKMPAGVKVECPTQTEILIKGSDKQQVGQVAAEIRAYRKPEPYKGKGVRYADEVVVIKETKKK.

It belongs to the universal ribosomal protein uL6 family. As to quaternary structure, part of the 50S ribosomal subunit.

In terms of biological role, this protein binds to the 23S rRNA, and is important in its secondary structure. It is located near the subunit interface in the base of the L7/L12 stalk, and near the tRNA binding site of the peptidyltransferase center. This Dechloromonas aromatica (strain RCB) protein is Large ribosomal subunit protein uL6.